Reading from the N-terminus, the 92-residue chain is Integration host factor subunit beta (92 aa).

Belongs to the bacterial histone-like protein family. In terms of assembly, heterodimer of an alpha and a beta chain.

This protein is one of the two subunits of integration host factor, a specific DNA-binding protein that functions in genetic recombination as well as in transcriptional and translational control. This is Integration host factor subunit beta from Azotobacter vinelandii (strain DJ / ATCC BAA-1303).